We begin with the raw amino-acid sequence, 806 residues long: Leucine--tRNA ligase (806 aa).

The 'HIGH' region signature appears at 40–51; sequence PYPSGAGLHVGH. The 'KMSKS' region motif lies at 578–582; that stretch reads KMSKS. An ATP-binding site is contributed by K581.

The protein belongs to the class-I aminoacyl-tRNA synthetase family.

The protein localises to the cytoplasm. It carries out the reaction tRNA(Leu) + L-leucine + ATP = L-leucyl-tRNA(Leu) + AMP + diphosphate. The protein is Leucine--tRNA ligase of Staphylococcus aureus (strain MSSA476).